The primary structure comprises 183 residues: Large ribosomal subunit protein uL5 (183 aa).

It belongs to the universal ribosomal protein uL5 family. As to quaternary structure, part of the 50S ribosomal subunit; contacts the 5S rRNA and probably tRNA. Forms a bridge to the 30S subunit in the 70S ribosome.

In terms of biological role, this is one of the proteins that bind and probably mediate the attachment of the 5S RNA into the large ribosomal subunit, where it forms part of the central protuberance. In the 70S ribosome it contacts protein S13 of the 30S subunit (bridge B1b), connecting the 2 subunits; this bridge is implicated in subunit movement. May contact the P site tRNA; the 5S rRNA and some of its associated proteins might help stabilize positioning of ribosome-bound tRNAs. The sequence is that of Large ribosomal subunit protein uL5 from Thermococcus kodakarensis (strain ATCC BAA-918 / JCM 12380 / KOD1) (Pyrococcus kodakaraensis (strain KOD1)).